Reading from the N-terminus, the 369-residue chain is MQENLDKRLEALRTEISLAARSLFDLDKKQKELQVLEEESSEENFWQDSVHAGKISEQIVSLRRQIQEYQELKSKIDAIEFFLEDADALEDPAICEDLEKEFLFCEKKLAVWETQRLLSGEADKNSCFLTINAGAGGTESCDWVEMLFRMYSRWATKHQWALEVVDRLDGEVVGIKHVTVKFSGMYAYGYAKAERGVHRLVRISPFDSNGKRHTSFASVDVFPEIDDQIKIEIRPNDLRIDTFRSSGAGGQHVNVTESAVRITHLPSGVVVSCQNERSQIQNRESCMKMLQAKLYQQVLQERLEKQSLDRKDKKEIAWGSQIRNYVFQPYTLVKDVRTGHETGNVQAMLDGELLDEFIKAYLAEFGEVS.

N5-methylglutamine is present on Gln-251.

The protein belongs to the prokaryotic/mitochondrial release factor family. Post-translationally, methylated by PrmC. Methylation increases the termination efficiency of RF2.

The protein localises to the cytoplasm. In terms of biological role, peptide chain release factor 2 directs the termination of translation in response to the peptide chain termination codons UGA and UAA. The polypeptide is Peptide chain release factor 2 (prfB) (Chlamydia pneumoniae (Chlamydophila pneumoniae)).